An 828-amino-acid chain; its full sequence is Periplasmic nitrate reductase (828 aa).

Residues 1–31 constitute a signal peptide (tat-type signal); the sequence is MKLSRRHFMKANAVAAAAAVAGITIPIAVRA. Residues 39-95 form the 4Fe-4S Mo/W bis-MGD-type domain; the sequence is IHWDKAPCRFCGVGCGVLVGTQNGRIVASQGDPEAPVNRGLNCIKGYFLPKIMYGQD. Residues cysteine 46, cysteine 49, cysteine 53, and cysteine 81 each contribute to the [4Fe-4S] cluster site. Mo-bis(molybdopterin guanine dinucleotide) contacts are provided by residues lysine 83, glutamine 150, asparagine 175, cysteine 179, 212–219, 243–247, 262–264, methionine 372, glutamine 376, asparagine 482, 508–509, lysine 531, aspartate 558, and 718–727; these read WGSNMAEM, STYQH, QTD, SD, and TGRVLEHWHT. A substrate-binding site is contributed by phenylalanine 794. Positions 802 and 819 each coordinate Mo-bis(molybdopterin guanine dinucleotide).

Belongs to the prokaryotic molybdopterin-containing oxidoreductase family. NasA/NapA/NarB subfamily. Component of the periplasmic nitrate reductase NapAB complex composed of NapA and NapB. [4Fe-4S] cluster is required as a cofactor. Mo-bis(molybdopterin guanine dinucleotide) serves as cofactor. In terms of processing, predicted to be exported by the Tat system. The position of the signal peptide cleavage has not been experimentally proven.

The protein localises to the periplasm. The enzyme catalyses 2 Fe(II)-[cytochrome] + nitrate + 2 H(+) = 2 Fe(III)-[cytochrome] + nitrite + H2O. Catalytic subunit of the periplasmic nitrate reductase complex NapAB. Receives electrons from NapB and catalyzes the reduction of nitrate to nitrite. The chain is Periplasmic nitrate reductase from Pectobacterium atrosepticum (strain SCRI 1043 / ATCC BAA-672) (Erwinia carotovora subsp. atroseptica).